The following is a 95-amino-acid chain: Aspartyl/glutamyl-tRNA(Asn/Gln) amidotransferase subunit C (95 aa).

This sequence belongs to the GatC family. As to quaternary structure, heterotrimer of A, B and C subunits.

It carries out the reaction L-glutamyl-tRNA(Gln) + L-glutamine + ATP + H2O = L-glutaminyl-tRNA(Gln) + L-glutamate + ADP + phosphate + H(+). It catalyses the reaction L-aspartyl-tRNA(Asn) + L-glutamine + ATP + H2O = L-asparaginyl-tRNA(Asn) + L-glutamate + ADP + phosphate + 2 H(+). In terms of biological role, allows the formation of correctly charged Asn-tRNA(Asn) or Gln-tRNA(Gln) through the transamidation of misacylated Asp-tRNA(Asn) or Glu-tRNA(Gln) in organisms which lack either or both of asparaginyl-tRNA or glutaminyl-tRNA synthetases. The reaction takes place in the presence of glutamine and ATP through an activated phospho-Asp-tRNA(Asn) or phospho-Glu-tRNA(Gln). This is Aspartyl/glutamyl-tRNA(Asn/Gln) amidotransferase subunit C from Methylobacillus flagellatus (strain ATCC 51484 / DSM 6875 / VKM B-1610 / KT).